A 351-amino-acid chain; its full sequence is MSEDSQWLLDWPVSGGARAGRAELKTSPEDFRVTESLWPTREDDAAASGPVEVSGDGEHLCLRLEKTGDNTEYVARELAALAGCRSFDVGFCGLKDRHAVTVQWFSLYRPGQEADDQALMAEVGQRWPVRAAVRHSRKLRRGDHQANGFEIVLRNVTGQRELVEAGLERLASQGAPNYFGPQRFGFQGGNLDRAVQIDPSRLNRKRGRAGRSASKNVLYFSAARSWLFNQVLAERVSNRTWTEVLPGEPEPSGAGPTGPLWGDGGTLASGEQETLERGVVDACPGLARLFQSTRMKPERRPLVAHPGEFKWQWLDTTTLRVQFVLSPGQYATTVLGDLFELEDLSLSRDNK.

D96 (nucleophile) is an active-site residue. One can recognise a TRUD domain in the interval 174-304 (GAPNYFGPQR…MKPERRPLVA (131 aa)). Residues 244 to 268 (VLPGEPEPSGAGPTGPLWGDGGTLA) form a disordered region.

The protein belongs to the pseudouridine synthase TruD family.

It catalyses the reaction uridine(13) in tRNA = pseudouridine(13) in tRNA. Functionally, responsible for synthesis of pseudouridine from uracil-13 in transfer RNAs. The protein is tRNA pseudouridine synthase D of Marinobacter nauticus (strain ATCC 700491 / DSM 11845 / VT8) (Marinobacter aquaeolei).